The sequence spans 489 residues: Hydantoin permease (489 aa).

Helical transmembrane passes span 30-50 (FSLAAIWFAMAIQVAIFIAAG), 58-78 (VWQVIVAIAAGCTIAVILLFF), 104-124 (LIPITLKALLSLFWFGFQTWL), 144-164 (LWIVIFGAIQVVTTFYGITFI), 167-187 (MNVFASPVLLAMGVYMVYLML), 207-227 (MPFSTAIMIFVGGWIAVVVSI), 258-278 (LGMVPASIIFGFIGAASMVLV), 299-321 (AILFQVFVLLATWSTNPAANLLS), 339-359 (GVIVSAVVGLLMMPWQFAGVL), 362-382 (FLNLLASALGPLAGIMISDYF), 405-424 (RGVNWVALAVYAVALAVSFL), and 428-445 (LMFVTGLIAALLLHIPAM). Alanine 38 and isoleucine 41 together coordinate Na(+). Residue glutamine 121 coordinates substrate. A substrate-binding site is contributed by glycine 219. Residues alanine 309, serine 312, and threonine 313 each contribute to the Na(+) site. Asparagine 318 is a binding site for substrate. The disordered stretch occupies residues 468 to 489 (PIGPVAPADESATANTKEQNQR). Polar residues predominate over residues 479–489 (ATANTKEQNQR).

The protein belongs to the purine-cytosine permease (2.A.39) family.

It is found in the membrane. Inhibited by dinitrophenol, 5-(2-naphthylmethyl)-D-hydantoin (D-NMH), 5-(2-naphthylmethyl)-L-hydantoin (L-NMH), 5-bromovinylhydantoin (BVH) and 5-indolylmethyl-L-hydantoin (L-IMH). The affinity of benzyl-hydantoin is increased over 10-fold in the presence of 15 mM of sodium. In terms of biological role, nucleobase-proton symporter that mediates the sodium-dependent binding and uptake of 5-aryl-substituted hydantoin compounds. 5-indolyl methyl hydantoin and 5-benzyl hydantoin are the preferred substrates, with selectivity for a hydrophobic substituent in position 5 of hydantoin and for the L isomer over the D isomer. In Microbacterium maritypicum (Microbacterium liquefaciens), this protein is Hydantoin permease.